We begin with the raw amino-acid sequence, 321 residues long: Lipoyl synthase (321 aa).

Positions 1-21 are disordered; sequence MRHRWEDRPVAPPPDGRPTEY. The [4Fe-4S] cluster site is built by cysteine 63, cysteine 68, cysteine 74, cysteine 89, cysteine 93, cysteine 96, and serine 302. The Radical SAM core domain occupies 75–291; the sequence is WNNRTATFMI…KKLGLEMGFS (217 aa). The tract at residues 301–321 is disordered; it reads SSYHAHEQTEDARRGALGARG. Positions 304 to 314 are enriched in basic and acidic residues; that stretch reads HAHEQTEDARR.

It belongs to the radical SAM superfamily. Lipoyl synthase family. It depends on [4Fe-4S] cluster as a cofactor.

The protein resides in the cytoplasm. The enzyme catalyses [[Fe-S] cluster scaffold protein carrying a second [4Fe-4S](2+) cluster] + N(6)-octanoyl-L-lysyl-[protein] + 2 oxidized [2Fe-2S]-[ferredoxin] + 2 S-adenosyl-L-methionine + 4 H(+) = [[Fe-S] cluster scaffold protein] + N(6)-[(R)-dihydrolipoyl]-L-lysyl-[protein] + 4 Fe(3+) + 2 hydrogen sulfide + 2 5'-deoxyadenosine + 2 L-methionine + 2 reduced [2Fe-2S]-[ferredoxin]. The protein operates within protein modification; protein lipoylation via endogenous pathway; protein N(6)-(lipoyl)lysine from octanoyl-[acyl-carrier-protein]: step 2/2. Functionally, catalyzes the radical-mediated insertion of two sulfur atoms into the C-6 and C-8 positions of the octanoyl moiety bound to the lipoyl domains of lipoate-dependent enzymes, thereby converting the octanoylated domains into lipoylated derivatives. The sequence is that of Lipoyl synthase from Rubrobacter xylanophilus (strain DSM 9941 / JCM 11954 / NBRC 16129 / PRD-1).